The following is a 606-amino-acid chain: Threonine--tRNA ligase (606 aa).

Residues 212-503 (DHRKLGVEMK…LIEHTAGELP (292 aa)) are catalytic. The Zn(2+) site is built by Cys304, His355, and His480.

Belongs to the class-II aminoacyl-tRNA synthetase family. In terms of assembly, homodimer. It depends on Zn(2+) as a cofactor.

The protein localises to the cytoplasm. The catalysed reaction is tRNA(Thr) + L-threonine + ATP = L-threonyl-tRNA(Thr) + AMP + diphosphate + H(+). Catalyzes the attachment of threonine to tRNA(Thr) in a two-step reaction: L-threonine is first activated by ATP to form Thr-AMP and then transferred to the acceptor end of tRNA(Thr). Also edits incorrectly charged L-seryl-tRNA(Thr). This chain is Threonine--tRNA ligase, found in Campylobacter curvus (strain 525.92).